A 279-amino-acid polypeptide reads, in one-letter code: HTH-type transcriptional regulator HdfR (279 aa).

An HTH lysR-type domain is found at 1–58; the sequence is MDTELLKTFLEVSRTRHFGRAAESLYLTQSAVSFRIRQLENQLGVNLFTRHRNNIRLT. The segment at residues 18 to 37 is a DNA-binding region (H-T-H motif); that stretch reads FGRAAESLYLTQSAVSFRIR.

It belongs to the LysR transcriptional regulatory family.

In terms of biological role, negatively regulates the transcription of the flagellar master operon flhDC by binding to the upstream region of the operon. The sequence is that of HTH-type transcriptional regulator HdfR from Escherichia coli O7:K1 (strain IAI39 / ExPEC).